A 183-amino-acid chain; its full sequence is MFHGSGLFALLLMVLEWTRPGLSSPLRPICDLRVLDHFIKEAWDAEAAMRTCKDDCSIATNVTVPLTRVDFEVWEAMNIEEQAQEVQSGLHMLNEAIGSLQISNQTEVLQSHIDASIRNIASIRQVLRSLSIPEYVPPTSSGEDKETQKISSISELFQVHVNFLRGKARLLLANAPVCRQGVS.

Residues 1–23 form the signal peptide; that stretch reads MFHGSGLFALLLMVLEWTRPGLS. Cystine bridges form between Cys30/Cys178 and Cys52/Cys56. N-linked (GlcNAc...) asparagine glycosylation is found at Asn61 and Asn104.

It belongs to the EPO/TPO family. Post-translationally, N-glycosylated. As to expression, expressed in heart and liver.

Its subcellular location is the secreted. In terms of biological role, erythropoietin is the principal hormone involved in the regulation of erythrocyte differentiation and the maintenance of a physiological level of circulating erythrocyte mass. The sequence is that of Erythropoietin (epo) from Danio rerio (Zebrafish).